A 456-amino-acid chain; its full sequence is Alcohol acyltransferase 1 (456 aa).

Catalysis depends on proton acceptor residues His-166 and Asp-382.

The protein belongs to the plant acyltransferase family.

Its function is as follows. Involved in the biosynthesis of volatile esters which confer kiwifruit flavor. Alcohol acyl transferase that can use a wide range of alcohols as substrate to produce esters. This is Alcohol acyltransferase 1 from Actinidia chinensis var. chinensis (Chinese soft-hair kiwi).